A 1270-amino-acid polypeptide reads, in one-letter code: Glycine betaine reductase ATRR (1270 aa).

Residues 14–418 (FTQQVRASPN…MIKLRGYSVV (405 aa)) are adenylation (A) domain. The Carrier domain maps to 528–605 (KEDPIGIEDI…GHLDTVRAIR (78 aa)). The residue at position 565 (Ser565) is an O-(pantetheine 4'-phosphoryl)serine. Positions 643 to 937 (KTVLLTGVTG…EPLSWDDWVA (295 aa)) are carboxylic acid reductase domain R1. The tract at residues 1026–1256 (PLSGKVAVVT…IYALRQPEHV (231 aa)) is aldehyde reductase domain R2.

It belongs to the NRP synthetase family.

Its activity is regulated as follows. The tetramethylammonium ion, which mimics the head group of glycine betaine, acts as a competitive inhibitor of ATRR A domain, whereas the potency decreased by three orders of magnitude with dimethylammonium. Choline is a mixed inhibitor for both glycine betaine reductase and aldehyde reductase activity but more potent in competition against glycine betaine in the first reduction step. Therefore, choline could act as a feedback inhibitor to regulate ATRR enzymatic activity. The lowered binding affinity of choline to R2 favors the release of choline after glycine betaine aldehyde reduction to avoid direct product inhibition. Its function is as follows. NRPS-like enzyme with an unusual domain architecture that converts back glycine betaine to choline via a 2-step reduction mechanism, and thereby can be an alternative source of choline. Permits direct reutilization of endogenously stored glycine betaine for on-demand biosynthesis of choline and choline derivatives, including phospholipid phosphatidylcholine (PC) which has an essential role in maintaining membrane integrity and functionality, or choline-O-sulfate, a mean for intracellular sulfate storage. Glycine betaine is activated by the adenylation (A) domain, and transferred to the thiolation (T) domain. Movement of the phosphopantetheine arm to the thioester reductase domain R1 then allows thioester reduction by NADPH of glycine betainoyl thioester to glycine betaine aldehyde, which is in turn reduced to choline by the aldehyde reductase domain R2. The chain is Glycine betaine reductase ATRR from Emericella nidulans (strain FGSC A4 / ATCC 38163 / CBS 112.46 / NRRL 194 / M139) (Aspergillus nidulans).